The following is an 846-amino-acid chain: Translation initiation factor IF-2 (846 aa).

A disordered region spans residues 199–219 (KREEEEKKSKAKKAGGKGFKK). Residues 207-219 (SKAKKAGGKGFKK) are compositionally biased toward basic residues. A tr-type G domain is found at 345-512 (SRAPVVTIMG…AVLLQSEVLE (168 aa)). The tract at residues 354–361 (GHVDHGKT) is G1. 354–361 (GHVDHGKT) is a GTP binding site. The segment at 379-383 (GITQH) is G2. The G3 stretch occupies residues 400–403 (DTPG). Residues 400–404 (DTPGH) and 454–457 (NKID) each bind GTP. Positions 454–457 (NKID) are G4. Residues 490–492 (SAK) are G5.

This sequence belongs to the TRAFAC class translation factor GTPase superfamily. Classic translation factor GTPase family. IF-2 subfamily.

It is found in the cytoplasm. In terms of biological role, one of the essential components for the initiation of protein synthesis. Protects formylmethionyl-tRNA from spontaneous hydrolysis and promotes its binding to the 30S ribosomal subunits. Also involved in the hydrolysis of GTP during the formation of the 70S ribosomal complex. The polypeptide is Translation initiation factor IF-2 (Francisella tularensis subsp. holarctica (strain LVS)).